We begin with the raw amino-acid sequence, 254 residues long: Small ribosomal subunit protein uS2 (254 aa).

This sequence belongs to the universal ribosomal protein uS2 family.

This chain is Small ribosomal subunit protein uS2, found in Brucella ovis (strain ATCC 25840 / 63/290 / NCTC 10512).